The primary structure comprises 279 residues: H-2 class II histocompatibility antigen gamma chain (279 aa).

Residues 1-23 (MDDQRDLISNHEQLPILGNRPRE) form a disordered region. Residues 1–29 (MDDQRDLISNHEQLPILGNRPREPERCSR) lie on the Cytoplasmic side of the membrane. At Ser-9 the chain carries Phosphoserine. A helical; Signal-anchor for type II membrane protein membrane pass occupies residues 30 to 55 (GALYTGVSVLVALLLAGQATTAYFLY). At 56 to 279 (QQQGRLDKLT…TRQELGQVTL (224 aa)) the chain is on the extracellular side. Asn-113 and Asn-119 each carry an N-linked (GlcNAc...) asparagine glycan. The Thyroglobulin type-1 domain maps to 193-254 (LTKCQEEVSH…HTKSRGRHNC (62 aa)). Disulfide bonds link Cys-196–Cys-215, Cys-226–Cys-233, and Cys-235–Cys-254. An O-linked (Xyl...) (chondroitin sulfate) serine glycan is attached at Ser-265.

Nonamer composed of three alpha/beta/gamma heterotrimers. Interacts with CD44; this complex is essential for the MIF-induced signaling cascade that results in B cell survival. In terms of assembly, interacts with the mature form of CTSL; the complex survive in neutral pH environment. Expressed in thymus and lymph noodes. Expressed by antigen-presenting cells (APCs). As to expression, expressed in thymus and lymph noodes.

The protein resides in the late endosome. Its subcellular location is the lysosome. It localises to the cell membrane. It is found in the endoplasmic reticulum membrane. The protein localises to the golgi apparatus. The protein resides in the trans-Golgi network. Its subcellular location is the endosome. It localises to the secreted. In terms of biological role, plays a critical role in MHC class II antigen processing by stabilizing peptide-free class II alpha/beta heterodimers in a complex soon after their synthesis and directing transport of the complex from the endoplasmic reticulum to compartments where peptide loading of class II takes place. Enhance also the stimulation of T-cell responses through interaction with CD44. Stabilizes the conformation of mature CTSL by binding to its active site and serving as a chaperone to help maintain a pool of mature enzyme in endocytic compartments and extracellular space of antigen-presenting cells (APCs). Its function is as follows. Binds to the peptide-binding site of MHC class II alpha/beta heterodimers forming an alpha-beta-CLIP complex, thereby preventing the loading of antigenic peptides to the MHC class II complex until its release by HLA-DM in the endosome. In Mus musculus (Mouse), this protein is H-2 class II histocompatibility antigen gamma chain.